The chain runs to 150 residues: SsrA-binding protein (150 aa).

Belongs to the SmpB family.

It is found in the cytoplasm. Required for rescue of stalled ribosomes mediated by trans-translation. Binds to transfer-messenger RNA (tmRNA), required for stable association of tmRNA with ribosomes. tmRNA and SmpB together mimic tRNA shape, replacing the anticodon stem-loop with SmpB. tmRNA is encoded by the ssrA gene; the 2 termini fold to resemble tRNA(Ala) and it encodes a 'tag peptide', a short internal open reading frame. During trans-translation Ala-aminoacylated tmRNA acts like a tRNA, entering the A-site of stalled ribosomes, displacing the stalled mRNA. The ribosome then switches to translate the ORF on the tmRNA; the nascent peptide is terminated with the 'tag peptide' encoded by the tmRNA and targeted for degradation. The ribosome is freed to recommence translation, which seems to be the essential function of trans-translation. The protein is SsrA-binding protein of Campylobacter jejuni (strain RM1221).